Here is a 556-residue protein sequence, read N- to C-terminus: Oxygen-dependent choline dehydrogenase (556 aa).

4 to 33 lines the FAD pocket; that stretch reads DYIIIGAGSAGNVLATRLTEDPNTSVLLLE. His-473 serves as the catalytic Proton acceptor.

It belongs to the GMC oxidoreductase family. FAD serves as cofactor.

It carries out the reaction choline + A = betaine aldehyde + AH2. It catalyses the reaction betaine aldehyde + NAD(+) + H2O = glycine betaine + NADH + 2 H(+). The protein operates within amine and polyamine biosynthesis; betaine biosynthesis via choline pathway; betaine aldehyde from choline (cytochrome c reductase route): step 1/1. In terms of biological role, involved in the biosynthesis of the osmoprotectant glycine betaine. Catalyzes the oxidation of choline to betaine aldehyde and betaine aldehyde to glycine betaine at the same rate. The protein is Oxygen-dependent choline dehydrogenase of Escherichia coli (strain K12 / DH10B).